A 257-amino-acid chain; its full sequence is Protein LigF (257 aa).

Residues 1–82 (MTLKLYSFGP…YLEDVFPESG (82 aa)) form the GST N-terminal domain. The GST C-terminal domain occupies 89 to 257 (DPFKRAEMRV…LLKRQNEKVA (169 aa)).

It belongs to the GST superfamily.

Lignin degradation enzyme. The chain is Protein LigF (ligF) from Sphingobium sp. (strain NBRC 103272 / SYK-6).